A 276-amino-acid chain; its full sequence is uncharacterized protein (276 aa).

10 consecutive transmembrane segments (helical) span residues 5 to 25, 31 to 51, 63 to 83, 89 to 109, 119 to 139, 142 to 162, 168 to 188, 200 to 220, 231 to 251, and 253 to 273; these read IVLA…KYSV, IAIA…IIIL, VFAL…LGEV, VASV…AIFL, VGII…YANI, IALV…GKSL, PITL…PFLP, LIGS…LGWY, ASVF…ILLA, and PLTL…YIVV. EamA domains follow at residues 12-133 and 150-274; these read TFWG…VISE and VAAA…IVVR.

This sequence belongs to the EamA transporter family.

It localises to the cell membrane. This is an uncharacterized protein from Archaeoglobus fulgidus (strain ATCC 49558 / DSM 4304 / JCM 9628 / NBRC 100126 / VC-16).